A 262-amino-acid polypeptide reads, in one-letter code: Chondroitin proteoglycan 3 (262 aa).

The N-terminal stretch at 1–17 (MRSSFIFALLLIGAALA) is a signal peptide. Residues 37–68 (FSGEASGEASGEASGEFSGEGSGEGSGELSPE) are disordered. Residues 39–53 (GEASGEASGEASGEF) are compositionally biased toward low complexity. N-linked (GlcNAc...) asparagine glycosylation is found at Asn140, Asn148, and Asn224.

This Caenorhabditis briggsae protein is Chondroitin proteoglycan 3 (cpg-3).